Here is a 542-residue protein sequence, read N- to C-terminus: CTP synthase (542 aa).

The interval 1–265 is amidoligase domain; that stretch reads MARYIFITGG…DQEVLAAFGI (265 aa). S13 contacts CTP. Position 13 (S13) interacts with UTP. 14 to 19 provides a ligand contact to ATP; it reads SLGKGL. Y54 is a binding site for L-glutamine. ATP is bound at residue D71. D71 and E139 together coordinate Mg(2+). CTP is bound by residues 146–148, 186–191, and K222; these read DIE and KTKPTQ. UTP-binding positions include 186–191 and K222; that span reads KTKPTQ. 238 to 240 provides a ligand contact to ATP; it reads RDV. The region spanning 291–541 is the Glutamine amidotransferase type-1 domain; the sequence is TIAIVGKYTG…IAAALEQSRL (251 aa). L-glutamine is bound at residue G353. The active-site Nucleophile; for glutamine hydrolysis is C380. L-glutamine-binding positions include 381–384, E404, and R469; that span reads FGMQ. Active-site residues include H514 and E516.

It belongs to the CTP synthase family. Homotetramer.

The enzyme catalyses UTP + L-glutamine + ATP + H2O = CTP + L-glutamate + ADP + phosphate + 2 H(+). The catalysed reaction is L-glutamine + H2O = L-glutamate + NH4(+). It carries out the reaction UTP + NH4(+) + ATP = CTP + ADP + phosphate + 2 H(+). Its pathway is pyrimidine metabolism; CTP biosynthesis via de novo pathway; CTP from UDP: step 2/2. Its activity is regulated as follows. Allosterically activated by GTP, when glutamine is the substrate; GTP has no effect on the reaction when ammonia is the substrate. The allosteric effector GTP functions by stabilizing the protein conformation that binds the tetrahedral intermediate(s) formed during glutamine hydrolysis. Inhibited by the product CTP, via allosteric rather than competitive inhibition. Functionally, catalyzes the ATP-dependent amination of UTP to CTP with either L-glutamine or ammonia as the source of nitrogen. Regulates intracellular CTP levels through interactions with the four ribonucleotide triphosphates. In Methylocella silvestris (strain DSM 15510 / CIP 108128 / LMG 27833 / NCIMB 13906 / BL2), this protein is CTP synthase.